We begin with the raw amino-acid sequence, 265 residues long: Mlc titration factor A (265 aa).

His111, His148, His152, and Glu211 together coordinate Zn(2+).

The protein belongs to the MtfA family. As to quaternary structure, interacts with Mlc. Zn(2+) serves as cofactor.

The protein localises to the cytoplasm. Involved in the modulation of the activity of the glucose-phosphotransferase system (glucose-PTS). Interacts with the transcriptional repressor Mlc, preventing its interaction with DNA and leading to the modulation of expression of genes regulated by Mlc, including ptsG, which encodes the PTS system glucose-specific EIICB component. Its function is as follows. Shows zinc-dependent metallopeptidase activity. This chain is Mlc titration factor A, found in Escherichia coli (strain SMS-3-5 / SECEC).